Reading from the N-terminus, the 275-residue chain is Phosphonoacetaldehyde hydrolase (275 aa).

The active-site Nucleophile is Asp15. Mg(2+) is bound by residues Asp15 and Ala17. Residue Lys56 is the Schiff-base intermediate with substrate of the active site. Asp189 is a Mg(2+) binding site.

This sequence belongs to the HAD-like hydrolase superfamily. PhnX family. As to quaternary structure, homodimer. Mg(2+) is required as a cofactor.

It catalyses the reaction phosphonoacetaldehyde + H2O = acetaldehyde + phosphate + H(+). In terms of biological role, involved in phosphonate degradation. In Pseudomonas putida (strain W619), this protein is Phosphonoacetaldehyde hydrolase.